The primary structure comprises 332 residues: UPF0194 membrane protein YbhG (332 aa).

The signal sequence occupies residues methionine 1–alanine 16. Positions asparagine 107 to alanine 209 form a coiled coil.

It belongs to the UPF0194 family.

It is found in the periplasm. The polypeptide is UPF0194 membrane protein YbhG (Escherichia coli (strain K12 / MC4100 / BW2952)).